A 156-amino-acid chain; its full sequence is 3-dehydroquinate dehydratase (156 aa).

Tyrosine 22 acts as the Proton acceptor in catalysis. The substrate site is built by asparagine 73, histidine 79, and aspartate 86. The Proton donor role is filled by histidine 99. Substrate is bound by residues 100–101 (LS) and arginine 110.

This sequence belongs to the type-II 3-dehydroquinase family. As to quaternary structure, homododecamer.

It carries out the reaction 3-dehydroquinate = 3-dehydroshikimate + H2O. It participates in metabolic intermediate biosynthesis; chorismate biosynthesis; chorismate from D-erythrose 4-phosphate and phosphoenolpyruvate: step 3/7. In terms of biological role, catalyzes a trans-dehydration via an enolate intermediate. The protein is 3-dehydroquinate dehydratase of Nitratiruptor sp. (strain SB155-2).